A 232-amino-acid polypeptide reads, in one-letter code: Ion-translocating oxidoreductase complex subunit E (232 aa).

A run of 6 helical transmembrane segments spans residues 18-38, 39-59, 69-89, 93-113, 127-147, and 182-202; these read GLVQ…ITNA, LGLG…VSLV, IPVF…LINA, GLYL…IIIG, AAFD…VLGA, and PFLL…LIAL.

This sequence belongs to the NqrDE/RnfAE family. As to quaternary structure, the complex is composed of six subunits: RnfA, RnfB, RnfC, RnfD, RnfE and RnfG.

It localises to the cell inner membrane. Part of a membrane-bound complex that couples electron transfer with translocation of ions across the membrane. The sequence is that of Ion-translocating oxidoreductase complex subunit E from Shewanella sp. (strain W3-18-1).